The primary structure comprises 162 residues: Mitochondrial fission process protein 1 (162 aa).

3 helical membrane passes run 36 to 56 (SLVK…YVAA), 81 to 101 (AIIA…IPGF), and 128 to 148 (TVTA…DAFV).

The protein belongs to the MTFP1 family.

Its subcellular location is the mitochondrion inner membrane. Its function is as follows. Involved in the mitochondrial division probably by regulating membrane fission. Loss-of-function leads to apoptosis. This chain is Mitochondrial fission process protein 1, found in Caenorhabditis briggsae.